We begin with the raw amino-acid sequence, 101 residues long: MPAEPLSPQEVEERLATLPGWSLDAGRLTRSYRLGSHFAAAAMVVHVAQVQEELDHHSDLTLGYHTVALAVHTHSAGGAVTEKDVELARRVEDLAAGHGAH.

It belongs to the pterin-4-alpha-carbinolamine dehydratase family.

It carries out the reaction (4aS,6R)-4a-hydroxy-L-erythro-5,6,7,8-tetrahydrobiopterin = (6R)-L-erythro-6,7-dihydrobiopterin + H2O. This Streptomyces coelicolor (strain ATCC BAA-471 / A3(2) / M145) protein is Putative pterin-4-alpha-carbinolamine dehydratase.